We begin with the raw amino-acid sequence, 479 residues long: Glycogen synthase (479 aa).

Lys-15 contributes to the ADP-alpha-D-glucose binding site.

It belongs to the glycosyltransferase 1 family. Bacterial/plant glycogen synthase subfamily.

It carries out the reaction [(1-&gt;4)-alpha-D-glucosyl](n) + ADP-alpha-D-glucose = [(1-&gt;4)-alpha-D-glucosyl](n+1) + ADP + H(+). It participates in glycan biosynthesis; glycogen biosynthesis. Synthesizes alpha-1,4-glucan chains using ADP-glucose. The polypeptide is Glycogen synthase (Pectobacterium atrosepticum (strain SCRI 1043 / ATCC BAA-672) (Erwinia carotovora subsp. atroseptica)).